The sequence spans 110 residues: Putative caspase recruitment domain-containing protein 17P (110 aa).

In terms of domain architecture, CARD spans 1–91; that stretch reads MADKVLKEKR…HLAGTLGLSA (91 aa).

As to quaternary structure, interacts with pro-CASP1. Ubiquitous.

The protein resides in the cytoplasm. Functionally, regulator of procaspase-1/CASP1 activation implicated in the regulation of the proteolytic maturation of pro-IL-1beta/IL1B and its release during inflammation. Inhibits the release of IL1B in response to LPS in monocytes. However, unlike CASP1, do not induce NF-kappa-B activation. This is Putative caspase recruitment domain-containing protein 17P (CARD17P) from Homo sapiens (Human).